A 221-amino-acid polypeptide reads, in one-letter code: Adenylate kinase (221 aa).

10 to 15 (GAGKGT) provides a ligand contact to ATP. The tract at residues 30-59 (STGDMLRAAVKAGTPLGLEAKRFMDAGELV) is NMP. AMP contacts are provided by residues Thr31, Arg36, 57-59 (ELV), 85-88 (GFPR), and Gln92. The segment at 122 to 159 (GRRSHAASGRTYHVKFNPPKVEGVDDMTGEPLIQRDDD) is LID. Residues Arg123 and 132 to 133 (TY) contribute to the ATP site. Residues Arg156 and Arg167 each coordinate AMP. Position 207 (Gly207) interacts with ATP.

This sequence belongs to the adenylate kinase family. In terms of assembly, monomer.

It localises to the cytoplasm. The enzyme catalyses AMP + ATP = 2 ADP. It functions in the pathway purine metabolism; AMP biosynthesis via salvage pathway; AMP from ADP: step 1/1. Its function is as follows. Catalyzes the reversible transfer of the terminal phosphate group between ATP and AMP. Plays an important role in cellular energy homeostasis and in adenine nucleotide metabolism. In Paraburkholderia phytofirmans (strain DSM 17436 / LMG 22146 / PsJN) (Burkholderia phytofirmans), this protein is Adenylate kinase.